Here is a 130-residue protein sequence, read N- to C-terminus: Small ribosomal subunit protein uS9 (130 aa).

Belongs to the universal ribosomal protein uS9 family.

The polypeptide is Small ribosomal subunit protein uS9 (Sodalis glossinidius (strain morsitans)).